We begin with the raw amino-acid sequence, 213 residues long: Adenylate kinase (213 aa).

10 to 15 (GAGKGT) is an ATP binding site. An NMP region spans residues 30 to 59 (AVGDIFRTIIKTSTSEAELINNYVKQGALI). AMP-binding positions include R36, 57–59 (ALI), 85–88 (GYPR), and Q92. Residues 123-161 (GRYSCKNCGKIYNVHFLQPKTDYVCDVCSSNVFDYRRDD) form an LID region. R124 is a binding site for ATP. Residues C127 and C130 each contribute to the Zn(2+) site. 133–134 (IY) provides a ligand contact to ATP. 2 residues coordinate Zn(2+): C147 and C150. 2 residues coordinate AMP: R158 and R169. Residue K197 coordinates ATP.

This sequence belongs to the adenylate kinase family. In terms of assembly, monomer.

The protein localises to the cytoplasm. It catalyses the reaction AMP + ATP = 2 ADP. Its pathway is purine metabolism; AMP biosynthesis via salvage pathway; AMP from ADP: step 1/1. Catalyzes the reversible transfer of the terminal phosphate group between ATP and AMP. Plays an important role in cellular energy homeostasis and in adenine nucleotide metabolism. The sequence is that of Adenylate kinase from Rickettsia typhi (strain ATCC VR-144 / Wilmington).